We begin with the raw amino-acid sequence, 141 residues long: Transcription antitermination protein NusB (141 aa).

It belongs to the NusB family.

Functionally, involved in transcription antitermination. Required for transcription of ribosomal RNA (rRNA) genes. Binds specifically to the boxA antiterminator sequence of the ribosomal RNA (rrn) operons. This chain is Transcription antitermination protein NusB, found in Fervidobacterium nodosum (strain ATCC 35602 / DSM 5306 / Rt17-B1).